We begin with the raw amino-acid sequence, 105 residues long: uncharacterized protein (105 aa).

The protein belongs to the EspC family.

Functionally, may be involved in assembly of the ESX-1 / type VII specialized secretion system (T7SS), which exports several proteins including EsxA and EsxB. Involved in DNA conjugation, in at least recipient strain. This is an uncharacterized protein from Mycolicibacterium smegmatis (strain MKD8) (Mycobacterium smegmatis).